The primary structure comprises 121 residues: Large ribosomal subunit protein bL17 (121 aa).

This sequence belongs to the bacterial ribosomal protein bL17 family. As to quaternary structure, part of the 50S ribosomal subunit. Contacts protein L32.

This is Large ribosomal subunit protein bL17 from Sulfurihydrogenibium sp. (strain YO3AOP1).